Here is a 239-residue protein sequence, read N- to C-terminus: tRNA (guanine-N(1)-)-methyltransferase (239 aa).

S-adenosyl-L-methionine-binding positions include G113 and 133 to 138; that span reads IGDYVL. The tract at residues 218–239 is disordered; the sequence is ERRPDLWAARATQNPPERKTNG.

The protein belongs to the RNA methyltransferase TrmD family. As to quaternary structure, homodimer.

Its subcellular location is the cytoplasm. The catalysed reaction is guanosine(37) in tRNA + S-adenosyl-L-methionine = N(1)-methylguanosine(37) in tRNA + S-adenosyl-L-homocysteine + H(+). Functionally, specifically methylates guanosine-37 in various tRNAs. The polypeptide is tRNA (guanine-N(1)-)-methyltransferase (Nitrobacter winogradskyi (strain ATCC 25391 / DSM 10237 / CIP 104748 / NCIMB 11846 / Nb-255)).